The following is a 426-amino-acid chain: Probable inactive metalloprotease YmfF (426 aa).

Histidine 50 and glutamate 138 together coordinate Zn(2+).

Belongs to the peptidase M16 family.

This chain is Probable inactive metalloprotease YmfF (ymfF), found in Bacillus subtilis (strain 168).